The sequence spans 112 residues: DNA-binding protein Memar_1972 (112 aa).

The segment at 14-35 (MEQMQRQAMDQQGMEEEAARQQ) is disordered.

It belongs to the PDCD5 family.

The chain is DNA-binding protein Memar_1972 from Methanoculleus marisnigri (strain ATCC 35101 / DSM 1498 / JR1).